The chain runs to 342 residues: MSKGTSSDTSLGRVSRAAFPSPTAAEMAEISRIQYEMEYTEGISQRMRVPEKLKVAPPNADLEQGFQEGVPNASVIMQVPERIVVAGNNEDVSFSRPADLDLIQSTPFKPLALKTPPRVLTLSERPLDFLDLERPPTTPQNEEIRAVGRLKRERSMSENAVRQNGQLVRNDSLWHRSDSAPRNKISRFQAPISAPEYTVTPSPQQARVCPPHMLPEDGANLSSARGILSLIQSSTRRAYQQILDVLDENRRPVLRGGSAAATSNPHHDNVRYGISNIDTTIEGTSDDLTVVDAASLRRQIIKLNRRLQLLEEENKERAKREMVMYSITVAFWLLNSWLWFRR.

At 1 to 322 (MSKGTSSDTS…ENKERAKREM (322 aa)) the chain is on the cytoplasmic side. A Phosphothreonine modification is found at Thr115. A Phosphoserine modification is found at Ala146. At Arg149 the chain carries Phosphothreonine. Phosphoserine is present on residues Lys151, Ser155, Ser157, and Ser172. The residue at position 200 (Thr200) is a Phosphothreonine. Phosphoserine is present on residues Ser202, Ser229, Ser233, and Ser295. The stretch at 291 to 322 (VDAASLRRQIIKLNRRLQLLEEENKERAKREM) forms a coiled coil. A helical; Anchor for type IV membrane protein transmembrane segment spans residues 323-340 (VMYSITVAFWLLNSWLWF). Over 341–342 (RR) the chain is Mitochondrial intermembrane.

Belongs to the Tango11 family. In terms of assembly, homodimer. Interacts with DNM1L. Interacts with C11orf65/MFI; the interaction inhibits MFF interaction with DNM1L. In terms of tissue distribution, highly expressed in heart, kidney, liver, brain, muscle, and stomach.

The protein resides in the mitochondrion outer membrane. Its subcellular location is the peroxisome. It localises to the cytoplasmic vesicle. It is found in the secretory vesicle. The protein localises to the synaptic vesicle. Its function is as follows. Plays a role in mitochondrial and peroxisomal fission. Promotes the recruitment and association of the fission mediator dynamin-related protein 1 (DNM1L) to the mitochondrial surface. May be involved in regulation of synaptic vesicle membrane dynamics by recruitment of DNM1L to clathrin-containing vesicles. This is Mitochondrial fission factor (MFF) from Homo sapiens (Human).